Consider the following 389-residue polypeptide: Formate-dependent phosphoribosylglycinamide formyltransferase (389 aa).

N(1)-(5-phospho-beta-D-ribosyl)glycinamide is bound by residues 12–13 (EL) and E72. ATP contacts are provided by residues R104, K145, 150 to 155 (SSGKGQ), 185 to 188 (EAFV), and E193. One can recognise an ATP-grasp domain in the interval 109-300 (DLASKELGLR…EFELHARAVL (192 aa)). Mg(2+)-binding residues include E258 and E270. N(1)-(5-phospho-beta-D-ribosyl)glycinamide-binding positions include D277, K348, and 355 to 356 (RR).

This sequence belongs to the PurK/PurT family. Homodimer.

The catalysed reaction is N(1)-(5-phospho-beta-D-ribosyl)glycinamide + formate + ATP = N(2)-formyl-N(1)-(5-phospho-beta-D-ribosyl)glycinamide + ADP + phosphate + H(+). Its pathway is purine metabolism; IMP biosynthesis via de novo pathway; N(2)-formyl-N(1)-(5-phospho-D-ribosyl)glycinamide from N(1)-(5-phospho-D-ribosyl)glycinamide (formate route): step 1/1. Functionally, involved in the de novo purine biosynthesis. Catalyzes the transfer of formate to 5-phospho-ribosyl-glycinamide (GAR), producing 5-phospho-ribosyl-N-formylglycinamide (FGAR). Formate is provided by PurU via hydrolysis of 10-formyl-tetrahydrofolate. The chain is Formate-dependent phosphoribosylglycinamide formyltransferase from Chlorobium phaeobacteroides (strain DSM 266 / SMG 266 / 2430).